The following is a 545-amino-acid chain: E3 ubiquitin-protein ligase ipaH9.8 (545 aa).

The interval Met1–Met242 is interaction with target proteins. 8 LRR repeats span residues Asn57–Ala77, Gln78–Leu99, Lys100–Pro117, Ala118–Leu139, Leu140–Gln157, Ala158–Asn179, Val182–Leu203, and Asn205–Thr228. A linker region spans residues Ser243–Leu250. The tract at residues His251–Ser545 is E3 ubiquitin-protein ligase catalytic domain. Residues Pro253–Ser545 form the NEL domain. The Glycyl thioester intermediate role is filled by Cys337.

Belongs to the LRR-containing bacterial E3 ligase family. As to quaternary structure, also interacts with human and mouse U2AF1 (U2AF35). Autoubiquitinated (in vitro). Ubiquitinated in the presence of host E1 ubiquitin-activating enzyme, E2 ubiquitin-conjugating enzyme and ubiquitin.

The protein localises to the secreted. It is found in the host cytoplasm. It localises to the host nucleus. It catalyses the reaction S-ubiquitinyl-[E2 ubiquitin-conjugating enzyme]-L-cysteine + [acceptor protein]-L-lysine = [E2 ubiquitin-conjugating enzyme]-L-cysteine + N(6)-ubiquitinyl-[acceptor protein]-L-lysine.. The protein operates within protein modification; protein ubiquitination. With respect to regulation, exists in an autoinhibited state in the absence of substrate protein, due to interactions of the leucine-rich repeats with NEL domain. Is activated upon binding to a substrate protein. Functionally, effector E3 ubiquitin ligase that interferes with host's ubiquitination pathway and modulates the acute inflammatory responses, thus facilitating bacterial colonization within the host cell. Interacts with IKBKG (NEMO) and TNIP1 (ABIN-1), a ubiquitin-binding adapter protein, which results in TNIP1-dependent 'Lys-27'-linked polyubiquitination of IKBKG. Consequently, polyubiquitinated IKBKG undergoes proteasome-dependent degradation, which perturbs NF-kappa-B activation during bacterial infection. Mediates polyubiquitination of host U2AF1, leading to its proteasomal degradation. Catalyzes 'Lys-48'-linked polyubiquitination and subsequent degradation of a subset of host guanylate-binding proteins (GBP1, GBP2, GBP4 and GBP6), thereby suppressing host cell defense. In contrast, host GBP3 and GBP7 are not ubiquitinated by IpaH9.8. Uses UBE2D2 (UBCH5B) as an E2 ubiquitin-conjugating enzyme. The polypeptide is E3 ubiquitin-protein ligase ipaH9.8 (Shigella flexneri).